Consider the following 218-residue polypeptide: uncharacterized protein (218 aa).

Basic and acidic residues predominate over residues methionine 184 to alanine 202. The disordered stretch occupies residues methionine 184 to lysine 218. A compositionally biased stretch (basic residues) spans glutamine 205–lysine 218.

This is an uncharacterized protein from Mycoplasma pneumoniae (strain ATCC 29342 / M129 / Subtype 1) (Mycoplasmoides pneumoniae).